We begin with the raw amino-acid sequence, 441 residues long: Endothelin receptor type B (441 aa).

A signal peptide spans 1 to 26 (MQPPPSLCGLALLALVLACGMAEVWG). The Extracellular segment spans residues 27-100 (EEREMPSAPA…RPTEIKDTFK (74 aa)). Positions 30 to 90 (EMPSAPATPP…APRRTPPPCQ (61 aa)) are disordered. Polar residues predominate over residues 47–65 (LTPSTKTSWPRDSNASLPR). N60 carries an N-linked (GlcNAc...) asparagine glycan. Residues 101 to 125 (YINTVVSCLVFVLGIIGNSTLLRII) form a helical membrane-spanning segment. The Cytoplasmic segment spans residues 126–136 (YKNKCMRNGPN). The chain crosses the membrane as a helical span at residues 137–162 (ILIASLALGDLLHIIIDIPINVYKLL). The Extracellular portion of the chain corresponds to 163-174 (AEDWPFGAEMCK). The cysteines at positions 173 and 254 are disulfide-linked. A helical transmembrane segment spans residues 175 to 196 (LVPFIQKASVGITVLSLCALSI). Topologically, residues 197–217 (DRYRAVASWSRIKGIGVPKWT) are cytoplasmic. Residues 218–242 (AVEIVLIWVVSVILAVPEAIGFNLV) traverse the membrane as a helical segment. Topologically, residues 243–270 (TIDYKGSYLRICLLNPTQKTAFMQFYKT) are extracellular. Residues 271-295 (AKDWWLFSFYFCLPLAITAFFYTLM) form a helical membrane-spanning segment. The Cytoplasmic portion of the chain corresponds to 296–323 (TCEMLRKKSGMQIALNDHLKQRREVAKT). S304 bears the Phosphoserine mark. A helical membrane pass occupies residues 324–349 (VFCLVLVFGLCWLALHLSRILKLTLY). Residues 350 to 361 (DQNDPNRCELLS) lie on the Extracellular side of the membrane. Residues 362–388 (FLLVLDYIGINMASLNSCINPIALYLV) traverse the membrane as a helical segment. Over 389-441 (SKRFKNCFKSCLCCWCQSFEEKQSLEEKQSCLKFKANDHGYDNFRSSNKYSSS) the chain is Cytoplasmic. S-palmitoyl cysteine attachment occurs at residues C402 and C404. Position 418 is a phosphoserine (S418). The residue at position 438 (Y438) is a Phosphotyrosine. Residues S439, S440, and S441 each carry the phosphoserine modification.

The protein belongs to the G-protein coupled receptor 1 family. Endothelin receptor subfamily. EDNRB sub-subfamily.

It localises to the cell membrane. Non-specific receptor for endothelin 1, 2, and 3. Mediates its action by association with G proteins that activate a phosphatidylinositol-calcium second messenger system. The chain is Endothelin receptor type B (EDNRB) from Oryctolagus cuniculus (Rabbit).